A 464-amino-acid chain; its full sequence is 3-isopropylmalate dehydratase large subunit (464 aa).

Residues Cys337, Cys397, and Cys400 each coordinate [4Fe-4S] cluster.

It belongs to the aconitase/IPM isomerase family. LeuC type 1 subfamily. Heterodimer of LeuC and LeuD. Requires [4Fe-4S] cluster as cofactor.

The enzyme catalyses (2R,3S)-3-isopropylmalate = (2S)-2-isopropylmalate. Its pathway is amino-acid biosynthesis; L-leucine biosynthesis; L-leucine from 3-methyl-2-oxobutanoate: step 2/4. Functionally, catalyzes the isomerization between 2-isopropylmalate and 3-isopropylmalate, via the formation of 2-isopropylmaleate. This Bacillus cereus (strain AH820) protein is 3-isopropylmalate dehydratase large subunit.